A 245-amino-acid chain; its full sequence is Biosynthetic peptidoglycan transglycosylase (245 aa).

Residues 20–42 (VYAGSVFAGAWLATQLFYLVQIA) form a helical membrane-spanning segment.

Belongs to the glycosyltransferase 51 family.

The protein resides in the cell inner membrane. It carries out the reaction [GlcNAc-(1-&gt;4)-Mur2Ac(oyl-L-Ala-gamma-D-Glu-L-Lys-D-Ala-D-Ala)](n)-di-trans,octa-cis-undecaprenyl diphosphate + beta-D-GlcNAc-(1-&gt;4)-Mur2Ac(oyl-L-Ala-gamma-D-Glu-L-Lys-D-Ala-D-Ala)-di-trans,octa-cis-undecaprenyl diphosphate = [GlcNAc-(1-&gt;4)-Mur2Ac(oyl-L-Ala-gamma-D-Glu-L-Lys-D-Ala-D-Ala)](n+1)-di-trans,octa-cis-undecaprenyl diphosphate + di-trans,octa-cis-undecaprenyl diphosphate + H(+). It participates in cell wall biogenesis; peptidoglycan biosynthesis. Peptidoglycan polymerase that catalyzes glycan chain elongation from lipid-linked precursors. This chain is Biosynthetic peptidoglycan transglycosylase, found in Burkholderia ambifaria (strain ATCC BAA-244 / DSM 16087 / CCUG 44356 / LMG 19182 / AMMD) (Burkholderia cepacia (strain AMMD)).